Reading from the N-terminus, the 105-residue chain is Intermembrane phospholipid transport system binding protein MlaB (105 aa).

One can recognise an STAS domain in the interval 4–105; that stretch reads WDLQKNNDKI…GLSDWIANFI (102 aa).

The complex is composed of two ATP-binding proteins (MlaF), two transmembrane proteins (MlaE), two cytoplasmic solute-binding proteins (MlaB) and six periplasmic solute-binding proteins (MlaD).

The protein localises to the cytoplasm. Part of the ABC transporter complex MlaFEDB, which is involved in a phospholipid transport pathway that maintains lipid asymmetry in the outer membrane by retrograde trafficking of phospholipids from the outer membrane to the inner membrane. MlaB plays critical roles in both the assembly and activity of the complex. May act by modulating MlaF structure and stability. The protein is Intermembrane phospholipid transport system binding protein MlaB of Haemophilus influenzae (strain ATCC 51907 / DSM 11121 / KW20 / Rd).